Here is a 466-residue protein sequence, read N- to C-terminus: Asparagine--tRNA ligase (466 aa).

This sequence belongs to the class-II aminoacyl-tRNA synthetase family. Homodimer.

It is found in the cytoplasm. It catalyses the reaction tRNA(Asn) + L-asparagine + ATP = L-asparaginyl-tRNA(Asn) + AMP + diphosphate + H(+). The sequence is that of Asparagine--tRNA ligase from Shewanella amazonensis (strain ATCC BAA-1098 / SB2B).